Consider the following 558-residue polypeptide: 2-isopropylmalate synthase (558 aa).

In terms of domain architecture, Pyruvate carboxyltransferase spans Pro-30–Glu-303. The Mg(2+) site is built by Asp-39, His-242, His-244, and Asn-278. The segment at Gln-437–Lys-558 is regulatory domain.

Belongs to the alpha-IPM synthase/homocitrate synthase family. LeuA type 2 subfamily. As to quaternary structure, homodimer. The cofactor is Mg(2+).

The protein localises to the cytoplasm. It catalyses the reaction 3-methyl-2-oxobutanoate + acetyl-CoA + H2O = (2S)-2-isopropylmalate + CoA + H(+). Its pathway is amino-acid biosynthesis; L-leucine biosynthesis; L-leucine from 3-methyl-2-oxobutanoate: step 1/4. Catalyzes the condensation of the acetyl group of acetyl-CoA with 3-methyl-2-oxobutanoate (2-ketoisovalerate) to form 3-carboxy-3-hydroxy-4-methylpentanoate (2-isopropylmalate). This Rhizobium meliloti (strain 1021) (Ensifer meliloti) protein is 2-isopropylmalate synthase.